We begin with the raw amino-acid sequence, 180 residues long: Non-specific lipid transfer protein GPI-anchored 3 (180 aa).

A signal peptide spans 1-22 (MEAVRFAVAVVLVFCYVTSSNA). 4 cysteine pairs are disulfide-bonded: C41–C78, C48–C62, C63–C104, and C76–C113. N-linked (GlcNAc...) asparagine glycosylation is found at N91 and N120. Composition is skewed to low complexity over residues 116–125 (SAGTNSSSTP) and 133–156 (PASS…TAKP). A disordered region spans residues 116 to 156 (SAGTNSSSTPPATPKTPPASSTSTGTGSGSTGNAAPSTAKP). S158 carries GPI-anchor amidated serine lipidation. Residues 159 to 180 (SAPAINFGGLSFASAVVATLFF) constitute a propeptide, removed in mature form.

The protein belongs to the plant LTP family. In terms of tissue distribution, restricted to stamen, pollen and sporophytic tissues. Also detected, at low levels, in stems and leaves.

Its subcellular location is the cell membrane. In terms of biological role, lipid transfer protein involved in seed and ovule maturation and development, probably by regulating the fatty acids homeostasis during suberin and sporopollenin biosynthesis or deposition. The sequence is that of Non-specific lipid transfer protein GPI-anchored 3 from Arabidopsis thaliana (Mouse-ear cress).